A 441-amino-acid polypeptide reads, in one-letter code: Hexane cyclase gkaB (441 aa).

The signal sequence occupies residues Met1–Thr25. N-linked (GlcNAc...) asparagine glycosylation is found at Asn77, Asn153, Asn184, and Asn308.

The protein belongs to the Diels-Alderase family.

It participates in mycotoxin biosynthesis. Hexane cyclase; part of the gene cluster that mediates the biosynthesis of GKK1032, fungal natural products containing a macrocyclic para-cyclophane connected to a decahydrofluorene ring system that show potent antitumor activities. Within the pathway, gkaB functions synergistically with gkaX and gkaZ to form the cyclophane. The pathway begins with the PKS-NRPS gkaA which, with the help of the trans-enoyl reductase gkaC, synthesizes the polyketide-tyrosyl acyl thioester product which can be reductively off-loaded by the terminal reductase (R) domain in gkaA. The alpha/beta hydrolase gkaG is then required to catalyze the subsequent Knoevenagel condensation that affords the 3-pyrrolin-2-one ring, whereas the three proteins gkaB, gkaX and gkaZ then function synergistically to form the cyclophane. In Penicillium citrinum, this protein is Hexane cyclase gkaB.